A 389-amino-acid chain; its full sequence is tRNA (cytosine(72)-C(5))-methyltransferase (389 aa).

Positions 92-167 (LPVVVANKYA…LAVEVTLPKF (76 aa)) constitute a PUA domain. Residues 209 to 215 (AAAPGGK), D233, R238, D260, D277, and Y304 contribute to the S-adenosyl-L-methionine site. The active-site Nucleophile is C327.

The protein belongs to the class I-like SAM-binding methyltransferase superfamily. RsmB/NOP family.

It catalyses the reaction cytidine(72) in tRNA + S-adenosyl-L-methionine = 5-methylcytidine(72) in tRNA + S-adenosyl-L-homocysteine + H(+). The catalysed reaction is cytidine(72) in tRNA(Thr) + S-adenosyl-L-methionine = 5-methylcytidine(72) in tRNA(Thr) + S-adenosyl-L-homocysteine + H(+). It carries out the reaction cytidine(72) in tRNA(Cys) + S-adenosyl-L-methionine = 5-methylcytidine(72) in tRNA(Cys) + S-adenosyl-L-homocysteine + H(+). In terms of biological role, S-adenosyl-L-methionine-dependent methyltransferase that specifically methylates the C5 position of cytosine 72 in several tRNAs. This modification appears to slightly promote the thermal stability of P.horikoshii tRNAs, but does not affect their amino acid accepting activity. Four elements in the acceptor stems of tRNAs are essential for substrate recognition by this enzyme: the target site C72, the 3'-CCA terminus, U73 or G73, and the second base pair C2:G71. This is tRNA (cytosine(72)-C(5))-methyltransferase from Pyrococcus horikoshii (strain ATCC 700860 / DSM 12428 / JCM 9974 / NBRC 100139 / OT-3).